The chain runs to 218 residues: Cytochrome b6 (218 aa).

A helical membrane pass occupies residues 35 to 55; sequence IFYCLGGITLVCFLIQFATGF. Cysteine 38 contributes to the heme c binding site. Heme b-binding residues include histidine 89 and histidine 103. 3 consecutive transmembrane segments (helical) span residues 93-113, 119-139, and 189-209; these read ASMM…TGGF, LTWV…VTGY, and LHTF…FLMI. Residues histidine 190 and histidine 205 each coordinate heme b.

The protein belongs to the cytochrome b family. PetB subfamily. The 4 large subunits of the cytochrome b6-f complex are cytochrome b6, subunit IV (17 kDa polypeptide, PetD), cytochrome f and the Rieske protein, while the 4 small subunits are PetG, PetL, PetM and PetN. The complex functions as a dimer. Requires heme b as cofactor. Heme c is required as a cofactor.

The protein resides in the cellular thylakoid membrane. Functionally, component of the cytochrome b6-f complex, which mediates electron transfer between photosystem II (PSII) and photosystem I (PSI), cyclic electron flow around PSI, and state transitions. The protein is Cytochrome b6 of Synechococcus sp. (strain WH7803).